Consider the following 312-residue polypeptide: DDRGK domain-containing protein 1 (312 aa).

Residues 1–2 lie on the Lumenal side of the membrane; sequence ME. A helical membrane pass occupies residues 3-23; it reads LIILVGIAIALLVVIITLYLL. Residues 24 to 312 are Cytoplasmic-facing; sequence QKKNAAPETK…ISAGGEEASS (289 aa). Residues 30–163 form a disordered region; sequence PETKPAAAPQ…KQQEDLEAEV (134 aa). Residues 52 to 85 are compositionally biased toward low complexity; the sequence is RRAQIARNQRNRLRQNAPAAPAGQVAPAAGAPAA. A compositionally biased stretch (acidic residues) spans 90–99; that stretch reads DHEDEGQVDA. Residues 110–163 show a composition bias toward basic and acidic residues; that stretch reads LDEKMGAKKRAKMEAKEQKRLQREQELHDREQRKVKEAKEEAERKQQEDLEAEV.

Belongs to the DDRGK1 family. Interacts with Atg9; the interaction is transient.

It is found in the endoplasmic reticulum membrane. Its function is as follows. Substrate adapter for ufmylation, the covalent attachment of the ubiquitin-like modifier UFM1 to substrate proteins. Required for ufmylation of Atg9; protects the nervous system during aging, possibly by stabilizing Atg9 and supporting its function. In Drosophila erecta (Fruit fly), this protein is DDRGK domain-containing protein 1.